Consider the following 102-residue polypeptide: Auxin-responsive protein SAUR68 (102 aa).

This sequence belongs to the ARG7 family.

It localises to the cell membrane. In terms of biological role, may promote auxin-stimulated organ elongation, such as hypocotyls, stamen filaments and petals. The chain is Auxin-responsive protein SAUR68 from Arabidopsis thaliana (Mouse-ear cress).